The primary structure comprises 448 residues: Methylenetetrahydrofolate--tRNA-(uracil-5-)-methyltransferase TrmFO (448 aa).

13 to 18 (GAGLAG) contacts FAD.

Belongs to the MnmG family. TrmFO subfamily. FAD is required as a cofactor.

Its subcellular location is the cytoplasm. The catalysed reaction is uridine(54) in tRNA + (6R)-5,10-methylene-5,6,7,8-tetrahydrofolate + NADH + H(+) = 5-methyluridine(54) in tRNA + (6S)-5,6,7,8-tetrahydrofolate + NAD(+). It catalyses the reaction uridine(54) in tRNA + (6R)-5,10-methylene-5,6,7,8-tetrahydrofolate + NADPH + H(+) = 5-methyluridine(54) in tRNA + (6S)-5,6,7,8-tetrahydrofolate + NADP(+). In terms of biological role, catalyzes the folate-dependent formation of 5-methyl-uridine at position 54 (M-5-U54) in all tRNAs. In Streptococcus pyogenes serotype M6 (strain ATCC BAA-946 / MGAS10394), this protein is Methylenetetrahydrofolate--tRNA-(uracil-5-)-methyltransferase TrmFO.